The chain runs to 526 residues: ATP synthase subunit alpha (526 aa).

Position 171–178 (171–178 (GDRQTGKT)) interacts with ATP.

The protein belongs to the ATPase alpha/beta chains family. F-type ATPases have 2 components, CF(1) - the catalytic core - and CF(0) - the membrane proton channel. CF(1) has five subunits: alpha(3), beta(3), gamma(1), delta(1), epsilon(1). CF(0) has four main subunits: a, b, b' and c.

The protein localises to the cell inner membrane. It catalyses the reaction ATP + H2O + 4 H(+)(in) = ADP + phosphate + 5 H(+)(out). In terms of biological role, produces ATP from ADP in the presence of a proton gradient across the membrane. The alpha chain is a regulatory subunit. The protein is ATP synthase subunit alpha of Chlorobium phaeobacteroides (strain BS1).